A 302-amino-acid polypeptide reads, in one-letter code: N-acetyl-D-glucosamine kinase (302 aa).

Residues 4 to 11 (GFDVGGTK) and 133 to 140 (GFGGGLVY) contribute to the ATP site. Histidine 157, cysteine 177, cysteine 179, and cysteine 184 together coordinate Zn(2+).

The protein belongs to the ROK (NagC/XylR) family. NagK subfamily.

The catalysed reaction is N-acetyl-D-glucosamine + ATP = N-acetyl-D-glucosamine 6-phosphate + ADP + H(+). It functions in the pathway cell wall biogenesis; peptidoglycan recycling. Functionally, catalyzes the phosphorylation of N-acetyl-D-glucosamine (GlcNAc) derived from cell-wall degradation, yielding GlcNAc-6-P. This is N-acetyl-D-glucosamine kinase from Vibrio cholerae serotype O1 (strain ATCC 39315 / El Tor Inaba N16961).